Reading from the N-terminus, the 78-residue chain is MSSVCQVTGASPGFGYAVSHSHRRTKRRFDPNVRRRTFYVATLGRRVTLNVSVKGLRLIDKRGIDAVVRDLIKKGVKL.

It belongs to the bacterial ribosomal protein bL28 family.

This chain is Large ribosomal subunit protein bL28, found in Tropheryma whipplei (strain TW08/27) (Whipple's bacillus).